A 369-amino-acid chain; its full sequence is Glycolate oxidase 5 (369 aa).

The region spanning 1 to 360 is the FMN hydroxy acid dehydrogenase domain; sequence MGEITNVTEY…TRNHVITEAD (360 aa). Residue Y25 coordinates glyoxylate. FMN is bound by residues 78–80, S107, 128–130, and T156; these read PSA and QLY. Glyoxylate is bound at residue Y130. R165 contacts glyoxylate. K231 and S253 together coordinate FMN. Positions 255 and 258 each coordinate glyoxylate. Catalysis depends on H255, which acts as the Proton acceptor. Residues 286–290 and 309–310 each bind FMN; these read DGGVR and GR. The Microbody targeting signal motif lies at 367 to 369; sequence SRL.

It belongs to the FMN-dependent alpha-hydroxy acid dehydrogenase family. In terms of assembly, homotetramer. FMN is required as a cofactor.

The protein resides in the peroxisome. It catalyses the reaction glycolate + O2 = glyoxylate + H2O2. Its pathway is photosynthesis; photorespiration; glycine from 2-phosphoglycolate: step 2/3. In terms of biological role, catalyzes the oxidation of glycolate to glyoxylate, with a reduction of O2 to H2O2. Is a key enzyme in photorespiration in green plants. The protein is Glycolate oxidase 5 (GLO5) of Oryza sativa subsp. japonica (Rice).